We begin with the raw amino-acid sequence, 29 residues long: NADH dehydrogenase [ubiquinone] 1 beta subcomplex subunit 10 (29 aa).

The disordered stretch occupies residues 1–29 (GRKKGVQFDEGAPDDFDPNNPYKKDVAFL).

The protein belongs to the complex I NDUFB10 subunit family. As to quaternary structure, complex I is composed of about 45 different subunits.

Its subcellular location is the mitochondrion inner membrane. Functionally, accessory subunit of the mitochondrial membrane respiratory chain NADH dehydrogenase (Complex I), that is believed not to be involved in catalysis. Complex I functions in the transfer of electrons from NADH to the respiratory chain. The immediate electron acceptor for the enzyme is believed to be ubiquinone. This chain is NADH dehydrogenase [ubiquinone] 1 beta subcomplex subunit 10, found in Solanum tuberosum (Potato).